A 220-amino-acid polypeptide reads, in one-letter code: LHFPL tetraspan subfamily member 1 protein (220 aa).

The signal sequence occupies residues 1-20 (MRNSLTMVGTFWAFLSLVTA). Helical transmembrane passes span 86–106 (VVTGAGCALLLLVALAAVLGC) and 122–142 (AAQFVGGLLISAGCALYPLGW). Residue N153 is glycosylated (N-linked (GlcNAc...) asparagine). Residues 165 to 185 (LGWAYYCAGGGAAAAMLICTW) form a helical membrane-spanning segment.

It belongs to the LHFP family. Widely expressed. Strongly expressed in vagina and ovary. Weakly expressed in spleen, kidney, thymus, testis, brain, lung, intestine and uterus.

The protein localises to the membrane. This chain is LHFPL tetraspan subfamily member 1 protein, found in Mus musculus (Mouse).